The following is a 149-amino-acid chain: UPF0306 protein PM1958 (149 aa).

This sequence belongs to the UPF0306 family.

This chain is UPF0306 protein PM1958, found in Pasteurella multocida (strain Pm70).